We begin with the raw amino-acid sequence, 117 residues long: UPF0251 protein DehaBAV1_0135 (117 aa).

This sequence belongs to the UPF0251 family.

The sequence is that of UPF0251 protein DehaBAV1_0135 from Dehalococcoides mccartyi (strain ATCC BAA-2100 / JCM 16839 / KCTC 5957 / BAV1).